Here is a 356-residue protein sequence, read N- to C-terminus: Protein-arginine kinase (356 aa).

The Phosphagen kinase C-terminal domain occupies 22-249; sequence FRPISTLSLS…SKILSAETEA (228 aa). Residues 25–29, 172–176, and 202–207 each bind ATP; these read ISTLS, VARAF, and SSLLPL.

It belongs to the ATP:guanido phosphotransferase family.

The enzyme catalyses L-arginyl-[protein] + ATP = N(omega)-phospho-L-arginyl-[protein] + ADP + H(+). Its function is as follows. Catalyzes the specific phosphorylation of arginine residues in proteins. The chain is Protein-arginine kinase from Chlamydia muridarum (strain MoPn / Nigg).